Consider the following 267-residue polypeptide: MKVGIDAGGTLIKIVQEQDNQRTFKTELTKNIDQVVEWLNQQQIEKLCLTGGNAGVIAENINIPAQIFVEFDAASQGLGILLKEQGHDLADYIFANVGTGTSLHYFDGQSQRRVGGIGTGGGMIQGLGYLLSQITDYKQLTDMAQHGDRNTIDLKVRHIYKDTEPPIPGDLTAANFGHVLHHLDADFTPSNKLAAVIGVVGEVVTTMAITVAREFKTENIVYIGSSFHNNALLRKVVEDYTVLRGCKPYYVENGAFSGAIGALYLGK.

Position 6–13 (6–13 (DAGGTLIK)) interacts with ATP. Glu70 serves as the catalytic Proton acceptor. ATP is bound by residues Thr99, 121–125 (GGMIQ), Tyr137, and Ser225.

Belongs to the type II pantothenate kinase family. As to quaternary structure, homodimer.

The protein resides in the cytoplasm. It carries out the reaction (R)-pantothenate + ATP = (R)-4'-phosphopantothenate + ADP + H(+). It functions in the pathway cofactor biosynthesis; coenzyme A biosynthesis; CoA from (R)-pantothenate: step 1/5. Its function is as follows. Catalyzes the phosphorylation of pantothenate (Pan), the first step in CoA biosynthesis. The protein is Type II pantothenate kinase of Staphylococcus aureus (strain Mu50 / ATCC 700699).